The primary structure comprises 396 residues: Elongation factor Tu (396 aa).

Positions 10–206 (KPHVNVGTIG…ALDSYIPTPE (197 aa)) constitute a tr-type G domain. The tract at residues 19–26 (GHVDHGKT) is G1. 19–26 (GHVDHGKT) serves as a coordination point for GTP. Residue threonine 26 coordinates Mg(2+). A G2 region spans residues 60-64 (GITIN). Positions 81–84 (DCPG) are G3. GTP contacts are provided by residues 81–85 (DCPGH) and 136–139 (NKCD). The interval 136–139 (NKCD) is G4. Residues 174-176 (SAK) form a G5 region.

This sequence belongs to the TRAFAC class translation factor GTPase superfamily. Classic translation factor GTPase family. EF-Tu/EF-1A subfamily. In terms of assembly, monomer.

The protein localises to the cytoplasm. The catalysed reaction is GTP + H2O = GDP + phosphate + H(+). Functionally, GTP hydrolase that promotes the GTP-dependent binding of aminoacyl-tRNA to the A-site of ribosomes during protein biosynthesis. The polypeptide is Elongation factor Tu (Herminiimonas arsenicoxydans).